Consider the following 357-residue polypeptide: DNA polymerase IV (357 aa).

In terms of domain architecture, UmuC spans 4–185 (IIHCDCDCFY…LPVERLFGVG (182 aa)). Residues Asp8 and Asp103 each contribute to the Mg(2+) site. Residue Glu104 is part of the active site.

The protein belongs to the DNA polymerase type-Y family. In terms of assembly, monomer. It depends on Mg(2+) as a cofactor.

The protein resides in the cytoplasm. It catalyses the reaction DNA(n) + a 2'-deoxyribonucleoside 5'-triphosphate = DNA(n+1) + diphosphate. Poorly processive, error-prone DNA polymerase involved in untargeted mutagenesis. Copies undamaged DNA at stalled replication forks, which arise in vivo from mismatched or misaligned primer ends. These misaligned primers can be extended by PolIV. Exhibits no 3'-5' exonuclease (proofreading) activity. May be involved in translesional synthesis, in conjunction with the beta clamp from PolIII. The chain is DNA polymerase IV from Ralstonia nicotianae (strain ATCC BAA-1114 / GMI1000) (Ralstonia solanacearum).